We begin with the raw amino-acid sequence, 467 residues long: Flagellar hook-associated protein 2 (467 aa).

The stretch at 411 to 439 (VNATLKSLTKQYLSVSNSIDETVARYKAQ) forms a coiled coil.

This sequence belongs to the FliD family. As to quaternary structure, homopentamer.

It is found in the secreted. Its subcellular location is the bacterial flagellum. In terms of biological role, required for the morphogenesis and for the elongation of the flagellar filament by facilitating polymerization of the flagellin monomers at the tip of growing filament. Forms a capping structure, which prevents flagellin subunits (transported through the central channel of the flagellum) from leaking out without polymerization at the distal end. The chain is Flagellar hook-associated protein 2 (fliD) from Salmonella typhimurium (strain LT2 / SGSC1412 / ATCC 700720).